The chain runs to 262 residues: Small ribosomal subunit protein eS1 (262 aa).

Positions 1 to 18 are enriched in basic residues; sequence MAVGKNKRISKGKKGSKK. The interval 1 to 20 is disordered; it reads MAVGKNKRISKGKKGSKKKT.

Belongs to the eukaryotic ribosomal protein eS1 family. As to quaternary structure, component of the small ribosomal subunit. Mature ribosomes consist of a small (40S) and a large (60S) subunit. The 40S subunit contains about 33 different proteins and 1 molecule of RNA (18S). The 60S subunit contains about 49 different proteins and 3 molecules of RNA (25S, 5.8S and 5S).

The protein resides in the cytoplasm. The chain is Small ribosomal subunit protein eS1 from Oryza sativa subsp. japonica (Rice).